Here is a 418-residue protein sequence, read N- to C-terminus: Deoxyribonuclease Tat-D (418 aa).

The a divalent metal cation site is built by Glu-185, His-226, His-277, and Asp-327.

It belongs to the metallo-dependent hydrolases superfamily. TatD-type hydrolase family. It depends on Mg(2+) as a cofactor.

Its subcellular location is the cytoplasm. Its function is as follows. Has both endo- and exonuclease activities. Incises double-stranded DNA without obvious specificity via its endonuclease activity and excises the DNA from the 3'-to 5'-end by its exonuclease activity. May have a role in apoptosis. This chain is Deoxyribonuclease Tat-D, found in Saccharomyces cerevisiae (strain ATCC 204508 / S288c) (Baker's yeast).